A 945-amino-acid chain; its full sequence is Leucine--tRNA ligase (945 aa).

The short motif at 43–53 is the 'HIGH' region element; sequence PYPNGAIHIGH. A 'KMSKS' region motif is present at residues 638–642; that stretch reads KMSKS. Lysine 641 contributes to the ATP binding site.

The protein belongs to the class-I aminoacyl-tRNA synthetase family.

Its subcellular location is the cytoplasm. It catalyses the reaction tRNA(Leu) + L-leucine + ATP = L-leucyl-tRNA(Leu) + AMP + diphosphate. The chain is Leucine--tRNA ligase from Pyrobaculum arsenaticum (strain DSM 13514 / JCM 11321 / PZ6).